A 346-amino-acid chain; its full sequence is Methylthioribose-1-phosphate isomerase (346 aa).

Residues 48–50 (RGA), arginine 91, and glutamine 196 contribute to the substrate site. The Proton donor role is filled by aspartate 237. 247–248 (NK) contacts substrate.

This sequence belongs to the eIF-2B alpha/beta/delta subunits family. MtnA subfamily.

It carries out the reaction 5-(methylsulfanyl)-alpha-D-ribose 1-phosphate = 5-(methylsulfanyl)-D-ribulose 1-phosphate. It functions in the pathway amino-acid biosynthesis; L-methionine biosynthesis via salvage pathway; L-methionine from S-methyl-5-thio-alpha-D-ribose 1-phosphate: step 1/6. Catalyzes the interconversion of methylthioribose-1-phosphate (MTR-1-P) into methylthioribulose-1-phosphate (MTRu-1-P). The protein is Methylthioribose-1-phosphate isomerase of Thermosipho africanus (strain TCF52B).